The following is a 275-amino-acid chain: MKYILLEIRLFFVCMSFLTRIPSPRWIGFQEEWLHHSIKYSPSVGFLLGSLQWFVFLLFQFLFGPTIAFTISLGFLLILTGAFHEDGFSDFCDGIGGGWKREDILRIMKDSRVGSFGAAGISLLLLLKVLGVSETFHQYEIKGLPFTFGSSAQIHLLSVWLYFVTAQSFSRFLSILMMKLLPYAKEEGYAKPMAKEINWPQIYFACIFGVTPFLALVYLHPYFLLSLLCIIPSFVYMFSLMKRWIQGFTGDCLGAVQQVVETCIWISGVFVWISI.

Helical transmembrane passes span 53 to 73 (WFVFLLFQFLFGPTIAFTISL), 113 to 133 (VGSFGAAGISLLLLLKVLGVS), 144 to 164 (LPFTFGSSAQIHLLSVWLYFV), 204 to 224 (FACIFGVTPFLALVYLHPYFL), 225 to 245 (LSLLCIIPSFVYMFSLMKRWI), and 253 to 273 (LGAVQQVVETCIWISGVFVWI).

It belongs to the CobS family. Mg(2+) is required as a cofactor.

It localises to the cell inner membrane. The enzyme catalyses alpha-ribazole + adenosylcob(III)inamide-GDP = adenosylcob(III)alamin + GMP + H(+). It carries out the reaction alpha-ribazole 5'-phosphate + adenosylcob(III)inamide-GDP = adenosylcob(III)alamin 5'-phosphate + GMP + H(+). The protein operates within cofactor biosynthesis; adenosylcobalamin biosynthesis; adenosylcobalamin from cob(II)yrinate a,c-diamide: step 7/7. Its function is as follows. Joins adenosylcobinamide-GDP and alpha-ribazole to generate adenosylcobalamin (Ado-cobalamin). Also synthesizes adenosylcobalamin 5'-phosphate from adenosylcobinamide-GDP and alpha-ribazole 5'-phosphate. In Leptospira biflexa serovar Patoc (strain Patoc 1 / Ames), this protein is Adenosylcobinamide-GDP ribazoletransferase.